A 714-amino-acid chain; its full sequence is MEMASAFTLNVRLDNIAIITIDVPGEKMNTLKAEFASQVRAIIKQIRENKELRGVVFVSAKPDNFIAGADINMIGNCKTAQEAEVLARQGQQLMAEIHALPIPVIAAIHGACLGGGLELALACHGRVCTDDPKTVLGLPEVQLGLLPGSGGTQRLPRLIGVSTALEMILTGKQLRAKQAVKLGLVDDVVPHSILLEAAVELAKQDRPSSRPLPVRERILAGPLGRALLFKMVGKKTEHKTQGNYPATERILEVVETGLAQGTSSGYDAEARAFGELAMTPQSQALRNIFFASTDVKKDPGSDAPPAPLNSVGILGGGLMGGGIAYVTACKAGLPVRIKDINPRGINHALKYSWDQLEGKVRRRHLKASERDKQLALISGTTDYCGFAHRDLIIEAVFENLELKQQMVAEVEQNCATHTIFASNTSSLPIGDIAAHAARPEQVIGLHFFSPVEKMPLVEIIPHASTSAQTIATTVKLAKKQGKTPIVVRDKAGFYVNRILAPYINEAIRMLTEGERIEHIDAALVKFGFPVGPIQLLDEVGIDTGTKIMPVLEAAYGERFSAPANVVSSILNDDRKGRKNGRGFYLYGQKGRKSKKQVDPAIYPLIGAQGQGRLSAPQVAERCVMLMLNEAVRCLDEQVIRSVRDGDIGAVFGIGFPPFLGGPFRYIDSLGAGEVVAIMQRLATQYGSRFTPCDRLVEMSERGESFWKTTATDLQ.

Residues 1 to 190 (MEMASAFTLN…KLGLVDDVVP (190 aa)) form an enoyl-CoA hydratase region. The segment at 306-714 (APLNSVGILG…FWKTTATDLQ (409 aa)) is 3-hydroxyacyl-CoA dehydrogenase.

The protein in the N-terminal section; belongs to the enoyl-CoA hydratase/isomerase family. This sequence in the central section; belongs to the 3-hydroxyacyl-CoA dehydrogenase family. As to quaternary structure, heterotetramer of two alpha chains (FadJ) and two beta chains (FadI).

It is found in the cytoplasm. The enzyme catalyses a (3S)-3-hydroxyacyl-CoA = a (2E)-enoyl-CoA + H2O. It carries out the reaction a 4-saturated-(3S)-3-hydroxyacyl-CoA = a (3E)-enoyl-CoA + H2O. The catalysed reaction is a (3S)-3-hydroxyacyl-CoA + NAD(+) = a 3-oxoacyl-CoA + NADH + H(+). It catalyses the reaction (3S)-3-hydroxybutanoyl-CoA = (3R)-3-hydroxybutanoyl-CoA. Its pathway is lipid metabolism; fatty acid beta-oxidation. Functionally, catalyzes the formation of a hydroxyacyl-CoA by addition of water on enoyl-CoA. Also exhibits 3-hydroxyacyl-CoA epimerase and 3-hydroxyacyl-CoA dehydrogenase activities. This is Fatty acid oxidation complex subunit alpha from Escherichia coli (strain UTI89 / UPEC).